The following is a 199-amino-acid chain: Chaperone protein TorD (199 aa).

Belongs to the TorD/DmsD family. TorD subfamily.

It localises to the cytoplasm. Functionally, involved in the biogenesis of TorA. Acts on TorA before the insertion of the molybdenum cofactor and, as a result, probably favors a conformation of the apoenzyme that is competent for acquiring the cofactor. The sequence is that of Chaperone protein TorD from Escherichia coli O81 (strain ED1a).